The primary structure comprises 101 residues: Small ubiquitin-related modifier 1 (101 aa).

In terms of domain architecture, Ubiquitin-like spans 20–97 (EYIKLKVIGQ…IEVYQEQTGG (78 aa)). A Glycyl lysine isopeptide (Gly-Lys) (interchain with K-? in acceptor proteins) cross-link involves residue G97. Positions 98–101 (HSTV) are excised as a propeptide.

This sequence belongs to the ubiquitin family. SUMO subfamily. As to quaternary structure, interacts with SAE2, UBE2I, RANBP2, PIAS1 and PIAS2. Covalently attached to a number of proteins. Cleavage of precursor form by a sentrin-specific protease is necessary for function.

Its subcellular location is the nucleus membrane. It localises to the nucleus speckle. The protein resides in the cytoplasm. It is found in the nucleus. The protein localises to the PML body. Its subcellular location is the cell membrane. Ubiquitin-like protein that can be covalently attached to proteins as a monomer or a lysine-linked polymer. Covalent attachment via an isopeptide bond to its substrates requires prior activation by the E1 complex SAE1-SAE2 and linkage to the E2 enzyme UBE2I. This post-translational modification on lysine residues of proteins plays a crucial role in a number of cellular processes such as nuclear transport, DNA replication and repair, mitosis and signal transduction. Polymeric SUMO1 chains are also susceptible to polyubiquitination which functions as a signal for proteasomal degradation of modified proteins. The chain is Small ubiquitin-related modifier 1 (SUMO1) from Gallus gallus (Chicken).